Consider the following 112-residue polypeptide: CLAVATA3/ESR (CLE)-related protein 44 (112 aa).

Residues 1–39 (MATTIDQTSIKSLHFHQVIRLIITIIFLAFLFLIGPTSS) form the signal peptide. The tract at residues 41 to 112 (NHHLHESSSK…VPSGPNPISN (72 aa)) is disordered. The segment covering 62–71 (QPSTPSSSTM) has biased composition (polar residues). 2 positions are modified to hydroxyproline: Pro104 and Pro107. O-linked (Ara...) hydroxyproline glycosylation is present at Pro107.

This sequence belongs to the CLV3/ESR signal peptide family. Interacts specifically with the leucine-rich repeat receptor-like protein kinase TDR, especially in the presence of SERK2. The O-glycosylation (arabinosylation) of the hydroxyproline Pro-107 enhances binding affinity of the CLE44p peptide for its receptor. In terms of tissue distribution, mostly expressed in flowers and leaves. Widely expressed along the vascular strands. In roots and hypocotyls, present in endodermal cells as well as cells in the phloem and the adjacent pericycle.

It localises to the secreted. It is found in the extracellular space. Extracellular signal peptide that regulates cell fate. May act with TDR as a ligand-receptor pair in a signal transduction pathway that represses tracheary element differentiation but promotes the formation of procambial cells adjacent to phloem cells in the veins. Regulates the transition of protophloem cells from proliferation to differentiation, thus impinging on postembryonic growth capacity of the root meristem; this signaling pathway requires CRN and CLV2. This Arabidopsis thaliana (Mouse-ear cress) protein is CLAVATA3/ESR (CLE)-related protein 44.